Reading from the N-terminus, the 520-residue chain is Succinyl-CoA:3-ketoacid coenzyme A transferase 2B, mitochondrial (520 aa).

The transit peptide at 1–39 (MAALRLLAWALPRGVSALRPRPALPHRLIRRYVSDRSGS) directs the protein to the mitochondrion. Positions 280–299 (ERLTTRDSKPAPGSKDNDPS) are disordered. Glutamate 342 functions as the 5-glutamyl coenzyme A thioester intermediate in the catalytic mechanism.

It belongs to the 3-oxoacid CoA-transferase family. As to quaternary structure, homodimer. In terms of tissue distribution, testis specific. Expressed in late spermatids. Accumulates during spermiogenesis. Also detected in the midpiece of spermatozoa.

The protein localises to the mitochondrion. The catalysed reaction is a 3-oxo acid + succinyl-CoA = a 3-oxoacyl-CoA + succinate. It participates in ketone metabolism; succinyl-CoA degradation; acetoacetyl-CoA from succinyl-CoA: step 1/1. In terms of biological role, key enzyme for ketone body catabolism. Transfers the CoA moiety from succinate to acetoacetate. Formation of the enzyme-CoA intermediate proceeds via an unstable anhydride species formed between the carboxylate groups of the enzyme and substrate. Probably play and important roles in the energy metabolism of spermatozoa. The protein is Succinyl-CoA:3-ketoacid coenzyme A transferase 2B, mitochondrial (Oxct2b) of Mus musculus (Mouse).